A 541-amino-acid polypeptide reads, in one-letter code: Chaperonin GroEL (541 aa).

ATP contacts are provided by residues 30–33, Lys-51, 87–91, Gly-415, 479–481, and Asp-495; these read TLGP, DGTTT, and NAA.

It belongs to the chaperonin (HSP60) family. In terms of assembly, forms a cylinder of 14 subunits composed of two heptameric rings stacked back-to-back. Interacts with the co-chaperonin GroES.

The protein localises to the cytoplasm. It carries out the reaction ATP + H2O + a folded polypeptide = ADP + phosphate + an unfolded polypeptide.. Functionally, together with its co-chaperonin GroES, plays an essential role in assisting protein folding. The GroEL-GroES system forms a nano-cage that allows encapsulation of the non-native substrate proteins and provides a physical environment optimized to promote and accelerate protein folding. This Acinetobacter baumannii (strain SDF) protein is Chaperonin GroEL.